Reading from the N-terminus, the 128-residue chain is Nucleoside diphosphate kinase B (128 aa).

Met1 carries the N-acetylmethionine modification. ATP contacts are provided by Lys9, Phe39, Thr70, Arg81, and Asn91. His94 serves as the catalytic Pros-phosphohistidine intermediate.

This sequence belongs to the NDK family. The cofactor is Mg(2+).

It localises to the cytoplasm. The protein resides in the nucleus. Its subcellular location is the cell projection. It is found in the lamellipodium. The protein localises to the ruffle. It carries out the reaction a 2'-deoxyribonucleoside 5'-diphosphate + ATP = a 2'-deoxyribonucleoside 5'-triphosphate + ADP. The enzyme catalyses a ribonucleoside 5'-diphosphate + ATP = a ribonucleoside 5'-triphosphate + ADP. Functionally, major role in the synthesis of nucleoside triphosphates other than ATP. This is Nucleoside diphosphate kinase B (nme2) from Merluccius bilinearis (Silver hake).